Reading from the N-terminus, the 233-residue chain is Small ribosomal subunit protein uS3 (233 aa).

One can recognise a KH type-2 domain in the interval 39–107; sequence VRQFLTKELS…PAQINIAEVR (69 aa).

It belongs to the universal ribosomal protein uS3 family. Part of the 30S ribosomal subunit. Forms a tight complex with proteins S10 and S14.

Its function is as follows. Binds the lower part of the 30S subunit head. Binds mRNA in the 70S ribosome, positioning it for translation. The sequence is that of Small ribosomal subunit protein uS3 from Vibrio vulnificus (strain CMCP6).